A 518-amino-acid chain; its full sequence is Crotonobetaine/carnitine--CoA ligase (518 aa).

It belongs to the ATP-dependent AMP-binding enzyme family.

The catalysed reaction is 4-(trimethylamino)butanoate + ATP + CoA = 4-(trimethylamino)butanoyl-CoA + AMP + diphosphate. It catalyses the reaction crotonobetaine + ATP + CoA = crotonobetainyl-CoA + AMP + diphosphate. It carries out the reaction (R)-carnitine + ATP + CoA = (R)-carnitinyl-CoA + AMP + diphosphate. Its pathway is amine and polyamine metabolism; carnitine metabolism. Functionally, catalyzes the transfer of CoA to carnitine, generating the initial carnitinyl-CoA needed for the CaiB reaction cycle. Also has activity toward crotonobetaine and gamma-butyrobetaine. The polypeptide is Crotonobetaine/carnitine--CoA ligase (Proteus mirabilis (strain HI4320)).